Here is a 55-residue protein sequence, read N- to C-terminus: Riparin-1.4 (55 aa).

The first 15 residues, 1–15 (MKIIVVLAVLMLVSA), serve as a signal peptide directing secretion. A propeptide spanning residues 16–41 (QVCLVSAAEMGHSSDNELSSRDLVKR) is cleaved from the precursor. Cys47 and Cys53 are joined by a disulfide. Positions 54 to 55 (NH) are excised as a propeptide.

Expressed by the skin glands.

The protein resides in the secreted. This chain is Riparin-1.4, found in Crinia riparia (Streambank froglet).